Consider the following 209-residue polypeptide: Regulator of G-protein signaling 1 (209 aa).

The disordered stretch occupies residues 18-42; sequence FFSASPKDSKEPSHSLLDDNKQKKR. Residues 24 to 38 are compositionally biased toward basic and acidic residues; the sequence is KDSKEPSHSLLDDNK. The 116-residue stretch at 85 to 200 folds into the RGS domain; it reads SLEKLLANQM…LKSNIYLNLL (116 aa).

Interacts with GNAI1 and GNAQ. As to expression, expressed in multiple tissues.

The protein resides in the cell membrane. Its subcellular location is the cytoplasm. The protein localises to the cytosol. Its function is as follows. Regulates G protein-coupled receptor signaling cascades, including signaling downstream of the N-formylpeptide chemoattractant receptors and leukotriene receptors. Inhibits B cell chemotaxis toward CXCL12. Inhibits signal transduction by increasing the GTPase activity of G protein alpha subunits, thereby driving them into their inactive GDP-bound form. In Rattus norvegicus (Rat), this protein is Regulator of G-protein signaling 1 (Rgs1).